The sequence spans 300 residues: Probable endonuclease 4 (300 aa).

The Zn(2+) site is built by histidine 69, histidine 110, glutamate 145, aspartate 179, histidine 182, histidine 214, aspartate 227, histidine 229, and glutamate 259.

Belongs to the AP endonuclease 2 family. Zn(2+) serves as cofactor.

It carries out the reaction Endonucleolytic cleavage to 5'-phosphooligonucleotide end-products.. Endonuclease IV plays a role in DNA repair. It cleaves phosphodiester bonds at apurinic or apyrimidinic (AP) sites, generating a 3'-hydroxyl group and a 5'-terminal sugar phosphate. The chain is Probable endonuclease 4 from Lachnoclostridium phytofermentans (strain ATCC 700394 / DSM 18823 / ISDg) (Clostridium phytofermentans).